The chain runs to 872 residues: Coatomer subunit gamma-2 (872 aa).

HEAT repeat units lie at residues 64 to 101 (MEATEAFFAMTRLFQSNDQTLRRMCYLTIKEMANISED), 283 to 320 (RELAPAVSVLQLFCSSPKPALRYAAVRTLNKVAMKHPS), 321 to 355 (AVTACNLDLENLITDSNRSIATLAITTLLKTGSES), 356 to 392 (SVDRLMKQISTFVSEISDEFKVVVVQAISALCQKYPR), 395 to 430 (SVMMTFLSNMLRDDGGFEYKRAIVDCIISIIEENPD), and 467 to 504 (PTPSKYIRFIFNRVVLENEAVRAAAVSALAKFGAQNEP).

The protein belongs to the COPG family. Oligomeric complex.

The protein resides in the cytoplasm. Its subcellular location is the golgi apparatus membrane. It localises to the cytoplasmic vesicle. It is found in the COPI-coated vesicle membrane. In terms of biological role, the coatomer is a cytosolic protein complex that binds to dilysine motifs and reversibly associates with Golgi non-clathrin-coated vesicles, which further mediate biosynthetic protein transport from the ER, via the Golgi up to the trans Golgi network. Coatomer complex is required for budding from Golgi membranes, and is essential for the retrograde Golgi-to-ER transport of dilysine-tagged proteins. In Xenopus tropicalis (Western clawed frog), this protein is Coatomer subunit gamma-2 (copg2).